Here is a 95-residue protein sequence, read N- to C-terminus: Large ribosomal subunit protein bL25 (95 aa).

Belongs to the bacterial ribosomal protein bL25 family. Part of the 50S ribosomal subunit; part of the 5S rRNA/L5/L18/L25 subcomplex. Contacts the 5S rRNA. Binds to the 5S rRNA independently of L5 and L18.

This is one of the proteins that binds to the 5S RNA in the ribosome where it forms part of the central protuberance. This is Large ribosomal subunit protein bL25 from Shewanella halifaxensis (strain HAW-EB4).